A 471-amino-acid chain; its full sequence is Tryptophanase (471 aa).

At Lys270 the chain carries N6-(pyridoxal phosphate)lysine.

This sequence belongs to the beta-eliminating lyase family. Homotetramer. Pyridoxal 5'-phosphate serves as cofactor.

The catalysed reaction is L-tryptophan + H2O = indole + pyruvate + NH4(+). The protein operates within amino-acid degradation; L-tryptophan degradation via pyruvate pathway; indole and pyruvate from L-tryptophan: step 1/1. This chain is Tryptophanase, found in Histophilus somni (strain 2336) (Haemophilus somnus).